The primary structure comprises 515 residues: Fatty acyl-CoA reductase 2 (515 aa).

At 1–464 the chain is on the cytoplasmic side; sequence MSMIAAFYSN…KAKQHLRRLR (464 aa). The helical transmembrane segment at 465-484 threads the bilayer; sequence NIHYLFNTALFLIIWRLLIA. Over 485–515 the chain is Peroxisomal; sequence RSQMARNVWFFIVSFCYKFISYFRASSTLKV.

Belongs to the fatty acyl-CoA reductase family. As to expression, specifically expressed in the meibomian glands of the eyelid and the sebaceous glands of the skin. Also expressed in the brain where large quantities of ether lipids are synthesized.

It is found in the peroxisome membrane. The enzyme catalyses a long-chain fatty acyl-CoA + 2 NADPH + 2 H(+) = a long-chain primary fatty alcohol + 2 NADP(+) + CoA. The catalysed reaction is hexadecanoyl-CoA + 2 NADPH + 2 H(+) = hexadecan-1-ol + 2 NADP(+) + CoA. It catalyses the reaction octadecanoyl-CoA + 2 NADPH + 2 H(+) = octadecan-1-ol + 2 NADP(+) + CoA. It carries out the reaction a very long-chain fatty acyl-CoA + 2 NADPH + 2 H(+) = a very long-chain primary fatty alcohol + 2 NADP(+) + CoA. The enzyme catalyses an ultra-long-chain fatty acyl-CoA + 2 NADPH + 2 H(+) = an ultra long-chain primary fatty alcohol + 2 NADP(+) + CoA. The catalysed reaction is eicosanoyl-CoA + 2 NADPH + 2 H(+) = eicosan-1-ol + 2 NADP(+) + CoA. It catalyses the reaction docosanoyl-CoA + 2 NADPH + 2 H(+) = docosan-1-ol + 2 NADP(+) + CoA. It carries out the reaction tetracosanoyl-CoA + 2 NADPH + 2 H(+) = tetracosan-1-ol + 2 NADP(+) + CoA. The enzyme catalyses hexacosanoyl-CoA + 2 NADPH + 2 H(+) = hexacosan-1-ol + 2 NADP(+) + CoA. The catalysed reaction is octacosanoyl-CoA + 2 NADPH + 2 H(+) = octacosan-1-ol + 2 NADP(+) + CoA. It catalyses the reaction triacontanoyl-CoA + 2 NADPH + 2 H(+) = triacontan-1-ol + 2 NADP(+) + CoA. It carries out the reaction 18-methylnonadecanoyl-CoA + 2 NADPH + 2 H(+) = 18-methylnonadecan-1-ol + 2 NADP(+) + CoA. The enzyme catalyses 20-methylheneicosanoyl-CoA + 2 NADPH + 2 H(+) = 20-methylheneicosan-1-ol + 2 NADP(+) + CoA. The catalysed reaction is 22-methyltricosanoyl-CoA + 2 NADPH + 2 H(+) = 22-methyltricosan-1-ol + 2 NADP(+) + CoA. It catalyses the reaction 24-methylpentacosanoyl-CoA + 2 NADPH + 2 H(+) = 24-methylpentacosan-1-ol + 2 NADP(+) + CoA. Its function is as follows. Catalyzes the reduction of saturated but not unsaturated C16 or C18 fatty acyl-CoA to fatty alcohols. A lower activity can be observed with shorter fatty acyl-CoA substrates. Can produce very long-chain and ultra long-chain FAls, regardless of whether they have a straight or branched chain. It may play a role in the production of ether lipids/plasmalogens and wax monoesters which synthesis requires fatty alcohols as substrates. In Mus musculus (Mouse), this protein is Fatty acyl-CoA reductase 2.